Consider the following 285-residue polypeptide: RNA 5'-monophosphate methyltransferase (285 aa).

Residues Arg46, Asn77, Asp111, Asp136–Ile137, and Met165 contribute to the S-adenosyl-L-methionine site. The Bin3-type SAM domain occupies Glu53–Pro275.

This sequence belongs to the methyltransferase superfamily. Interacts with DICER1; the interaction may be mediated by RNA.

It is found in the cytoplasm. The catalysed reaction is a 5'-end 5'-phospho-ribonucleoside-RNA + S-adenosyl-L-methionine = a 5'-end (5'-methylphospho)-ribonucleoside-RNA + S-adenosyl-L-homocysteine. The enzyme catalyses a 5'-end 5'-phospho-ribonucleoside-RNA + 2 S-adenosyl-L-methionine = a 5'-end (5'-bismethylphospho)-ribonucleoside-RNA + 2 S-adenosyl-L-homocysteine. Functionally, O-methyltransferase that specifically monomethylates 5'-monophosphate of cytoplasmic histidyl tRNA (tRNA(His)), acting as a capping enzyme by protecting tRNA(His) from cleavage by DICER1. Also able, with less efficiently, to methylate the 5' monophosphate of a subset of pre-miRNAs, acting as a negative regulator of miRNA processing. The 5' monophosphate of pre-miRNAs is recognized by DICER1 and is required for pre-miRNAs processing: methylation at this position reduces the processing of pre-miRNAs by DICER1. Was also reported to mediate dimethylation of pre-miR-145; however dimethylation cannot be reproduced by another group which observes a monomethylation of pre-miR-145. This Mus musculus (Mouse) protein is RNA 5'-monophosphate methyltransferase.